Consider the following 254-residue polypeptide: Aquaporin TIP1-2 (254 aa).

The next 2 membrane-spanning stretches (helical) occupy residues 24-44 (VAEF…GMAF) and 56-76 (AGLI…VSVG). Positions 85-87 (NPA) match the NPA 1 motif. 3 helical membrane passes run 103-123 (ALVY…LLKI), 144-164 (AVVL…ATAV), and 173-193 (VIAP…GGAF). Residues 199 to 201 (NPA) carry the NPA 2 motif. Residues 220–240 (WVGPLAGAAIAALVYDIIFIG) traverse the membrane as a helical segment.

It belongs to the MIP/aquaporin (TC 1.A.8) family. TIP (TC 1.A.8.10) subfamily.

It localises to the vacuole membrane. Functionally, aquaporins facilitate the transport of water and small neutral solutes across cell membranes. The protein is Aquaporin TIP1-2 (TIP1-2) of Zea mays (Maize).